The sequence spans 47 residues: Mu-theraphotoxin-An1a (47 aa).

Disulfide bonds link C4-C34, C8-C39, and C22-C44.

Post-translationally, contains 3 disulfide bonds. As to expression, expressed by the venom gland.

It localises to the secreted. Its function is as follows. Is toxic to insects. Reduces amplitude and frequency of spontaneous firing and inhibits voltage-gated sodium current (Nav) in the dorsal unpaired median (DUM) neurons of P.americana. This Acanthoscurria natalensis (Tarantula spider) protein is Mu-theraphotoxin-An1a.